Here is a 201-residue protein sequence, read N- to C-terminus: FMN-dependent NADH:quinone oxidoreductase (201 aa).

Residues Ser-10, 16–18 (SQS), 96–99 (MYNF), and 140–143 (SRGG) contribute to the FMN site.

This sequence belongs to the azoreductase type 1 family. As to quaternary structure, homodimer. FMN serves as cofactor.

It catalyses the reaction 2 a quinone + NADH + H(+) = 2 a 1,4-benzosemiquinone + NAD(+). The catalysed reaction is N,N-dimethyl-1,4-phenylenediamine + anthranilate + 2 NAD(+) = 2-(4-dimethylaminophenyl)diazenylbenzoate + 2 NADH + 2 H(+). In terms of biological role, quinone reductase that provides resistance to thiol-specific stress caused by electrophilic quinones. Functionally, also exhibits azoreductase activity. Catalyzes the reductive cleavage of the azo bond in aromatic azo compounds to the corresponding amines. This Pectobacterium atrosepticum (strain SCRI 1043 / ATCC BAA-672) (Erwinia carotovora subsp. atroseptica) protein is FMN-dependent NADH:quinone oxidoreductase.